The sequence spans 424 residues: Adenylosuccinate synthetase (424 aa).

GTP-binding positions include 12–18 (GDEGKGK) and 40–42 (GHT). Asp-13 functions as the Proton acceptor in the catalytic mechanism. Positions 13 and 40 each coordinate Mg(2+). IMP is bound by residues 13–16 (DEGK), 38–41 (NAGH), Thr-130, Arg-144, Asn-220, Thr-235, and Arg-299. Catalysis depends on His-41, which acts as the Proton donor. Position 295–301 (295–301 (VTTGRRR)) interacts with substrate. GTP-binding positions include Arg-301, 327–329 (KLD), and 412–414 (GTG).

The protein belongs to the adenylosuccinate synthetase family. As to quaternary structure, homodimer. It depends on Mg(2+) as a cofactor.

The protein resides in the cytoplasm. The catalysed reaction is IMP + L-aspartate + GTP = N(6)-(1,2-dicarboxyethyl)-AMP + GDP + phosphate + 2 H(+). Its pathway is purine metabolism; AMP biosynthesis via de novo pathway; AMP from IMP: step 1/2. In terms of biological role, plays an important role in the de novo pathway and in the salvage pathway of purine nucleotide biosynthesis. Catalyzes the first committed step in the biosynthesis of AMP from IMP. This chain is Adenylosuccinate synthetase, found in Neosartorya fischeri (strain ATCC 1020 / DSM 3700 / CBS 544.65 / FGSC A1164 / JCM 1740 / NRRL 181 / WB 181) (Aspergillus fischerianus).